A 418-amino-acid chain; its full sequence is F-box/LRR-repeat protein 14 (418 aa).

In terms of domain architecture, F-box spans 2 to 48 (ETHISCLFPELLAMIFGYLDVRDKGRAAQVCTAWRDAAYHKSVWRGV). The required for down-regulation of SNAI1 stretch occupies residues 2–48 (ETHISCLFPELLAMIFGYLDVRDKGRAAQVCTAWRDAAYHKSVWRGV). LRR repeat units lie at residues 144 to 163 (GLEV…GLLL), 170 to 191 (RLKS…GHLA), 203 to 225 (GLEQ…HISR), 229 to 250 (GLRL…LHLS), and 254 to 275 (SLRS…MHLA).

Part of a SCF (SKP1-cullin-F-box) ubiquitin-protein ligase complex. Interacts with SKP1 and CUL1. Interacts with SNAI1; the interaction requires the phosphorylation of the two serine residues in the substrate destruction motif D-S-G-X(2,3,4)-S.

It is found in the cytoplasm. Functionally, substrate-recognition component of some SCF (SKP1-CUL1-F-box protein)-type E3 ubiquitin-protein ligase complexes. The SCF(FBXL14) complex acts by mediating ubiquitination and subsequent degradation of SNAI1. This is F-box/LRR-repeat protein 14 (FBXL14) from Homo sapiens (Human).